The sequence spans 520 residues: GMP synthase [glutamine-hydrolyzing] (520 aa).

Positions 9-202 (SVLIVDFGSQ…IHNVAGIKGD (194 aa)) constitute a Glutamine amidotransferase type-1 domain. The active-site Nucleophile is the Cys-86. Residues His-176 and Glu-178 contribute to the active site. Residues 203–395 (WSMSAYRQKA…LGLPDSFIGR (193 aa)) enclose the GMPS ATP-PPase domain. 230 to 236 (SGGVDSS) serves as a coordination point for ATP.

As to quaternary structure, homodimer.

It catalyses the reaction XMP + L-glutamine + ATP + H2O = GMP + L-glutamate + AMP + diphosphate + 2 H(+). It functions in the pathway purine metabolism; GMP biosynthesis; GMP from XMP (L-Gln route): step 1/1. Its function is as follows. Catalyzes the synthesis of GMP from XMP. The protein is GMP synthase [glutamine-hydrolyzing] of Rhizobium etli (strain ATCC 51251 / DSM 11541 / JCM 21823 / NBRC 15573 / CFN 42).